Reading from the N-terminus, the 166-residue chain is Large ribosomal subunit protein uL10 (166 aa).

This sequence belongs to the universal ribosomal protein uL10 family. Part of the ribosomal stalk of the 50S ribosomal subunit. The N-terminus interacts with L11 and the large rRNA to form the base of the stalk. The C-terminus forms an elongated spine to which L12 dimers bind in a sequential fashion forming a multimeric L10(L12)X complex.

Its function is as follows. Forms part of the ribosomal stalk, playing a central role in the interaction of the ribosome with GTP-bound translation factors. The protein is Large ribosomal subunit protein uL10 of Streptococcus agalactiae serotype V (strain ATCC BAA-611 / 2603 V/R).